Consider the following 141-residue polypeptide: Large ribosomal subunit protein uL11 (141 aa).

It belongs to the universal ribosomal protein uL11 family. In terms of assembly, part of the ribosomal stalk of the 50S ribosomal subunit. Interacts with L10 and the large rRNA to form the base of the stalk. L10 forms an elongated spine to which L12 dimers bind in a sequential fashion forming a multimeric L10(L12)X complex. Post-translationally, one or more lysine residues are methylated.

Functionally, forms part of the ribosomal stalk which helps the ribosome interact with GTP-bound translation factors. The sequence is that of Large ribosomal subunit protein uL11 from Opitutus terrae (strain DSM 11246 / JCM 15787 / PB90-1).